Reading from the N-terminus, the 793-residue chain is Alanine--tRNA ligase, mitochondrial (793 aa).

Residues arginine 88, tryptophan 187, and 224–226 (IWN) each bind ATP. Residues asparagine 226 and aspartate 249 each coordinate L-alanine. Glycine 253 is a binding site for ATP. 4 residues coordinate Zn(2+): histidine 594, histidine 598, cysteine 706, and histidine 710.

Belongs to the class-II aminoacyl-tRNA synthetase family. In terms of assembly, monomer. The cofactor is Zn(2+).

The protein localises to the mitochondrion. It carries out the reaction tRNA(Ala) + L-alanine + ATP = L-alanyl-tRNA(Ala) + AMP + diphosphate. Functionally, catalyzes the attachment of alanine to tRNA(Ala) in a two-step reaction: alanine is first activated by ATP to form Ala-AMP and then transferred to the acceptor end of tRNA(Ala). Also edits incorrectly charged tRNA(Ala) via its editing domain. The chain is Alanine--tRNA ligase, mitochondrial from Caenorhabditis elegans.